The chain runs to 251 residues: Protein unc-119 homolog B (251 aa).

Residues 1-28 (MSGSNPKAAAAASAAGPGGLVAGKEEKK) are disordered. S2 bears the N-acetylserine mark. At K24 the chain carries N6-acetyllysine. Y142 contributes to the tetradecanoate binding site.

The protein belongs to the PDE6D/unc-119 family. In terms of assembly, found in a complex with ARL3, RP2 and UNC119B; RP2 induces hydrolysis of GTP ARL3 in the complex, leading to the release of UNC119B. Interacts with NPHP3 (when myristoylated). Interacts with CYS1 (when myristoylated). Interacts with MACIR; interaction only takes place when UNC119B is not liganded with myristoylated proteins.

It is found in the cell projection. It localises to the cilium. Its function is as follows. Myristoyl-binding protein that acts as a cargo adapter: specifically binds the myristoyl moiety of a subset of N-terminally myristoylated proteins and is required for their localization. Binds myristoylated NPHP3 and plays a key role in localization of NPHP3 to the primary cilium membrane. Does not bind all myristoylated proteins. Probably plays a role in trafficking proteins in photoreceptor cells. In Homo sapiens (Human), this protein is Protein unc-119 homolog B (UNC119B).